Here is a 109-residue protein sequence, read N- to C-terminus: C-X-C motif chemokine 13 (109 aa).

An N-terminal signal peptide occupies residues 1-22; it reads MKFISTSLLLMLLVSSLSPVQG. Cystine bridges form between Cys33–Cys60 and Cys35–Cys76.

Belongs to the intercrine alpha (chemokine CxC) family. Highest levels in liver, followed by spleen, lymph node, appendix and stomach. Low levels in salivary gland, mammary gland and fetal spleen.

It is found in the secreted. In terms of biological role, chemotactic for B-lymphocytes but not for T-lymphocytes, monocytes and neutrophils. Does not induce calcium release in B-lymphocytes. Binds to BLR1/CXCR5. The protein is C-X-C motif chemokine 13 (CXCL13) of Homo sapiens (Human).